The chain runs to 587 residues: RuBisCO large subunit-binding protein subunit alpha, chloroplastic (587 aa).

The segment covering 1 to 25 (MASTNALSSTSILRSPTNQAQTSLS) has biased composition (polar residues). Residues 1 to 33 (MASTNALSSTSILRSPTNQAQTSLSKKVKQHGR) form a disordered region. A chloroplast-targeting transit peptide spans 1–47 (MASTNALSSTSILRSPTNQAQTSLSKKVKQHGRVNFRQKPNRFVVKA).

The protein belongs to the chaperonin (HSP60) family. Oligomer of probably six alpha and six beta subunits.

It is found in the plastid. It localises to the chloroplast. Its function is as follows. This protein binds RuBisCO small and large subunits and is implicated in the assembly of the enzyme oligomer. The protein is RuBisCO large subunit-binding protein subunit alpha, chloroplastic of Pisum sativum (Garden pea).